An 82-amino-acid chain; its full sequence is RNA-binding protein Hfq (82 aa).

Residues 10-70 (DTFLNHVRKN…ISTIMPAQPV (61 aa)) form the Sm domain.

It belongs to the Hfq family. As to quaternary structure, homohexamer.

Functionally, RNA chaperone that binds small regulatory RNA (sRNAs) and mRNAs to facilitate mRNA translational regulation in response to envelope stress, environmental stress and changes in metabolite concentrations. Also binds with high specificity to tRNAs. The sequence is that of RNA-binding protein Hfq from Parvibaculum lavamentivorans (strain DS-1 / DSM 13023 / NCIMB 13966).